Here is a 483-residue protein sequence, read N- to C-terminus: Cobyric acid synthase (483 aa).

The region spanning 252-430 (ALQVVAVAYP…LHRLFDSGPF (179 aa)) is the GATase cobBQ-type domain. Residue C333 is the Nucleophile of the active site. H422 is a catalytic residue.

The protein belongs to the CobB/CobQ family. CobQ subfamily.

It participates in cofactor biosynthesis; adenosylcobalamin biosynthesis. Catalyzes amidations at positions B, D, E, and G on adenosylcobyrinic A,C-diamide. NH(2) groups are provided by glutamine, and one molecule of ATP is hydrogenolyzed for each amidation. The sequence is that of Cobyric acid synthase from Halorhodospira halophila (strain DSM 244 / SL1) (Ectothiorhodospira halophila (strain DSM 244 / SL1)).